Consider the following 118-residue polypeptide: Holo-[acyl-carrier-protein] synthase (118 aa).

Positions 6 and 55 each coordinate Mg(2+).

It belongs to the P-Pant transferase superfamily. AcpS family. Mg(2+) serves as cofactor.

Its subcellular location is the cytoplasm. The catalysed reaction is apo-[ACP] + CoA = holo-[ACP] + adenosine 3',5'-bisphosphate + H(+). Functionally, transfers the 4'-phosphopantetheine moiety from coenzyme A to a Ser of acyl-carrier-protein. This is Holo-[acyl-carrier-protein] synthase from Chlorobium chlorochromatii (strain CaD3).